The primary structure comprises 63 residues: Large ribosomal subunit protein uL30 (63 aa).

The protein belongs to the universal ribosomal protein uL30 family. Part of the 50S ribosomal subunit.

This Rickettsia felis (strain ATCC VR-1525 / URRWXCal2) (Rickettsia azadi) protein is Large ribosomal subunit protein uL30.